A 155-amino-acid polypeptide reads, in one-letter code: 3-hydroxyacyl-[acyl-carrier-protein] dehydratase FabZ (155 aa).

Residue His-59 is part of the active site.

This sequence belongs to the thioester dehydratase family. FabZ subfamily.

It is found in the cytoplasm. The catalysed reaction is a (3R)-hydroxyacyl-[ACP] = a (2E)-enoyl-[ACP] + H2O. Functionally, involved in unsaturated fatty acids biosynthesis. Catalyzes the dehydration of short chain beta-hydroxyacyl-ACPs and long chain saturated and unsaturated beta-hydroxyacyl-ACPs. This is 3-hydroxyacyl-[acyl-carrier-protein] dehydratase FabZ from Bartonella henselae (strain ATCC 49882 / DSM 28221 / CCUG 30454 / Houston 1) (Rochalimaea henselae).